We begin with the raw amino-acid sequence, 236 residues long: Histone H1 (236 aa).

Positions methionine 1–alanine 10 are enriched in basic and acidic residues. Disordered stretches follow at residues methionine 1–threonine 36 and lysine 94–alanine 236. Over residues alanine 11 to threonine 36 the composition is skewed to low complexity. Positions threonine 36–lysine 111 constitute an H15 domain. Residues leucine 109–alanine 122 are compositionally biased toward basic residues. Basic and acidic residues predominate over residues proline 123–alanine 150. Residues alanine 153–alanine 162 are compositionally biased toward low complexity. The span at proline 165–alanine 174 shows a compositional bias: basic and acidic residues. Positions alanine 202–alanine 220 are enriched in low complexity. Residues lysine 224–alanine 236 are compositionally biased toward basic and acidic residues.

The protein belongs to the histone H1/H5 family.

The protein localises to the nucleus. It is found in the chromosome. Its function is as follows. Could act as an H1-type linker histone. This chain is Histone H1 (hH1), found in Neurospora crassa (strain ATCC 24698 / 74-OR23-1A / CBS 708.71 / DSM 1257 / FGSC 987).